The primary structure comprises 105 residues: Wound-induced protein 1 (105 aa).

The protein to potato anionic peroxidase. Ubiquitous.

This is Wound-induced protein 1 (WUN1) from Solanum tuberosum (Potato).